Reading from the N-terminus, the 918-residue chain is Isoleucine--tRNA ligase (918 aa).

The short motif at 57-67 (PYANGHIHIGH) is the 'HIGH' region element. L-isoleucyl-5'-AMP is bound at residue Glu-564. The 'KMSKS' region motif lies at 605-609 (KMSKS). Lys-608 is a binding site for ATP. Zn(2+) is bound by residues Cys-888, Cys-891, Cys-903, and Cys-906.

This sequence belongs to the class-I aminoacyl-tRNA synthetase family. IleS type 1 subfamily. As to quaternary structure, monomer. The cofactor is Zn(2+).

Its subcellular location is the cytoplasm. It carries out the reaction tRNA(Ile) + L-isoleucine + ATP = L-isoleucyl-tRNA(Ile) + AMP + diphosphate. In terms of biological role, catalyzes the attachment of isoleucine to tRNA(Ile). As IleRS can inadvertently accommodate and process structurally similar amino acids such as valine, to avoid such errors it has two additional distinct tRNA(Ile)-dependent editing activities. One activity is designated as 'pretransfer' editing and involves the hydrolysis of activated Val-AMP. The other activity is designated 'posttransfer' editing and involves deacylation of mischarged Val-tRNA(Ile). This Nitratiruptor sp. (strain SB155-2) protein is Isoleucine--tRNA ligase.